The chain runs to 156 residues: Transcription antitermination protein NusB (156 aa).

Belongs to the NusB family.

In terms of biological role, involved in transcription antitermination. Required for transcription of ribosomal RNA (rRNA) genes. Binds specifically to the boxA antiterminator sequence of the ribosomal RNA (rrn) operons. This chain is Transcription antitermination protein NusB, found in Rickettsia rickettsii (strain Iowa).